The chain runs to 208 residues: Thymidylate kinase (208 aa).

Position 10 to 17 (10 to 17 (GPDGSGKT)) interacts with ATP.

It belongs to the thymidylate kinase family.

It catalyses the reaction dTMP + ATP = dTDP + ADP. Phosphorylation of dTMP to form dTDP in both de novo and salvage pathways of dTTP synthesis. The polypeptide is Thymidylate kinase (Listeria monocytogenes serotype 4b (strain CLIP80459)).